Consider the following 601-residue polypeptide: Probable inactive receptor kinase At1g27190 (601 aa).

Positions 1-24 are cleaved as a signal peptide; the sequence is MKKIFITLLWLLFISSFLCSSSSA. N-linked (GlcNAc...) asparagine glycosylation is present at Asn52. 5 LRR repeats span residues 73-95, 97-119, 122-144, 146-169, and 170-192; these read RIIS…LKLC, SLQS…ICSW, YLVT…IVEC, FLNA…SRLD, and RLRR…LARF. The chain crosses the membrane as a helical span at residues 221-241; sequence IIIVAGVLGAVGSLCVGLVIF. Thr298 bears the Phosphothreonine mark. One can recognise a Protein kinase domain in the interval 301–586; it reads FSSGNIDVSS…KNMADKHGVS (286 aa). ATP is bound by residues 307–315 and Lys329; that span reads DVSSRTGVS. The residue at position 383 (Ser383) is a Phosphoserine. Thr399 bears the Phosphothreonine mark. At Tyr476 the chain carries Phosphotyrosine. Ser478 bears the Phosphoserine mark. Thr479 carries the phosphothreonine modification. A phosphoserine mark is found at Ser483 and Ser586.

It belongs to the protein kinase superfamily. Ser/Thr protein kinase family.

It localises to the membrane. The protein is Probable inactive receptor kinase At1g27190 of Arabidopsis thaliana (Mouse-ear cress).